Here is a 250-residue protein sequence, read N- to C-terminus: 2,3-bisphosphoglycerate-dependent phosphoglycerate mutase (250 aa).

Substrate-binding positions include R10 to N17, T23 to G24, R62, E89 to Y92, K100, R116 to R117, and G185 to N186. The active-site Tele-phosphohistidine intermediate is the H11. Catalysis depends on E89, which acts as the Proton donor/acceptor.

The protein belongs to the phosphoglycerate mutase family. BPG-dependent PGAM subfamily. In terms of assembly, homodimer.

It catalyses the reaction (2R)-2-phosphoglycerate = (2R)-3-phosphoglycerate. The protein operates within carbohydrate degradation; glycolysis; pyruvate from D-glyceraldehyde 3-phosphate: step 3/5. Its function is as follows. Catalyzes the interconversion of 2-phosphoglycerate and 3-phosphoglycerate. The sequence is that of 2,3-bisphosphoglycerate-dependent phosphoglycerate mutase from Shigella boydii serotype 4 (strain Sb227).